The following is a 606-amino-acid chain: DNA ligase (606 aa).

ATP is bound at residue E263. K265 functions as the N6-AMP-lysine intermediate in the catalytic mechanism. 6 residues coordinate ATP: R270, R285, E315, F355, R432, and K438.

It belongs to the ATP-dependent DNA ligase family. The cofactor is Mg(2+). Requires Mn(2+) as cofactor.

The catalysed reaction is ATP + (deoxyribonucleotide)n-3'-hydroxyl + 5'-phospho-(deoxyribonucleotide)m = (deoxyribonucleotide)n+m + AMP + diphosphate.. The enzyme catalyses ADP + (deoxyribonucleotide)n-3'-hydroxyl + 5'-phospho-(deoxyribonucleotide)m = (deoxyribonucleotide)n+m + AMP + phosphate.. It carries out the reaction GTP + (deoxyribonucleotide)n-3'-hydroxyl + 5'-phospho-(deoxyribonucleotide)m = (deoxyribonucleotide)n+m + GMP + diphosphate.. Functionally, DNA ligase that seals nicks in double-stranded DNA during DNA replication, DNA recombination and DNA repair. Can use ATP, ADP and GTP, but not CTP, TTP or NAD(+). The chain is DNA ligase from Sulfophobococcus zilligii.